The primary structure comprises 105 residues: Large ribosomal subunit protein uL24 (105 aa).

The protein belongs to the universal ribosomal protein uL24 family. As to quaternary structure, part of the 50S ribosomal subunit.

Functionally, one of two assembly initiator proteins, it binds directly to the 5'-end of the 23S rRNA, where it nucleates assembly of the 50S subunit. Its function is as follows. One of the proteins that surrounds the polypeptide exit tunnel on the outside of the subunit. The protein is Large ribosomal subunit protein uL24 of Aeromonas hydrophila subsp. hydrophila (strain ATCC 7966 / DSM 30187 / BCRC 13018 / CCUG 14551 / JCM 1027 / KCTC 2358 / NCIMB 9240 / NCTC 8049).